The following is a 303-amino-acid chain: MYYGFDIGGTKIALGVFDSTRRLQWEKRVPTPHTSYSAFLDAVCELVEEADQRFGVKGSVGIGIPGMPETEDGTLYAANVPAASGKPLRADLSARLDRDVRLDNDANCFALSEAWDDEFTQYPLVMGLILGTGVGGGLVLNGKPITGQSYITGEFGHMRLPVDALTLMGFDFPLRRCGCGQMGCIENYLSGRGFAWLYQHYYHQSLQAPEIIALWEQGDEQAHAHVERYLDLLAVCLGNILTIVDPDLLVIGGGLSNFTAITTQLAERLPRHLLPVARAPRIERARHGDAGGRRGAAFLHLTD.

ATP-binding positions include 4-11 and 133-140; these read GFDIGGTK and GVGGGLVL. Residues His-157, Cys-177, Cys-179, and Cys-184 each contribute to the Zn(2+) site.

This sequence belongs to the ROK (NagC/XylR) family. NagK subfamily.

The catalysed reaction is N-acetyl-D-glucosamine + ATP = N-acetyl-D-glucosamine 6-phosphate + ADP + H(+). Its pathway is cell wall biogenesis; peptidoglycan recycling. Functionally, catalyzes the phosphorylation of N-acetyl-D-glucosamine (GlcNAc) derived from cell-wall degradation, yielding GlcNAc-6-P. This chain is N-acetyl-D-glucosamine kinase, found in Salmonella dublin (strain CT_02021853).